The chain runs to 565 residues: MELEYESKRPLYIPYAGPILLEFPLLNKGSAFTNDERNHFNLHGLLPEAVETIEEQAERAYRQYQDFKNDDDKHIYLRNIQDTNETLFYRLLEAHLSEMMPIIYTPTVGEACEHFSDIYRRARGLFISYPNREHIDDMLQNATKQNVKVIVVTDGERILGLGDQGIGGMGIPIGKLSLYTACGGISPAYTLPVVLDVGTNNPQRLNDPLYMGWRHPRISGDEYYAFVDEFIQAVKRRWPNVLLQFEDFAQKNATPLLNRYRDELCCFNDDIQGTAAVTLGSLIAASHAAGSQLRDQTVTFLGAGSAGCGIAEQIIAQMMSEGLSEIQARARIFMVDRFGLLTDKLPNLLDFQSKLVQKSDDLHHWNLHNDAISLLDVVRNAKPTVLIGVSGQPGLFTEELIREMHSHCARPIVMPLSNPTSRVEARPEDIINWTDGAALVATGSPFPPVSYKEKLYPIAQCNNSYIFPGIGLGVLASGASRVTDGMLMAASRALAESSPLARHGEGALLPNIDDIQAVSKAIAMRVGQAAQLQGVAIVTSEEALSKAIEHNYWQPQYRSYKRTSF.

Y104 serves as the catalytic Proton donor. An NAD(+)-binding site is contributed by R157. K175 functions as the Proton acceptor in the catalytic mechanism. Residues E246, D247, and D270 each contribute to the a divalent metal cation site. NAD(+) is bound by residues D270 and N418.

This sequence belongs to the malic enzymes family. Homotetramer. The cofactor is Mg(2+). Mn(2+) serves as cofactor.

The enzyme catalyses (S)-malate + NAD(+) = pyruvate + CO2 + NADH. It carries out the reaction oxaloacetate + H(+) = pyruvate + CO2. This is NAD-dependent malic enzyme from Yersinia pseudotuberculosis serotype O:1b (strain IP 31758).